A 301-amino-acid chain; its full sequence is ATP synthase gamma chain (301 aa).

It belongs to the ATPase gamma chain family. As to quaternary structure, F-type ATPases have 2 components, CF(1) - the catalytic core - and CF(0) - the membrane proton channel. CF(1) has five subunits: alpha(3), beta(3), gamma(1), delta(1), epsilon(1). CF(0) has three main subunits: a, b and c.

Its subcellular location is the cell inner membrane. In terms of biological role, produces ATP from ADP in the presence of a proton gradient across the membrane. The gamma chain is believed to be important in regulating ATPase activity and the flow of protons through the CF(0) complex. This Helicobacter pylori (strain J99 / ATCC 700824) (Campylobacter pylori J99) protein is ATP synthase gamma chain.